The chain runs to 264 residues: 5'-nucleotidase SurE (264 aa).

Aspartate 10, aspartate 11, serine 43, and asparagine 99 together coordinate a divalent metal cation.

It belongs to the SurE nucleotidase family. It depends on a divalent metal cation as a cofactor.

Its subcellular location is the cytoplasm. It carries out the reaction a ribonucleoside 5'-phosphate + H2O = a ribonucleoside + phosphate. Nucleotidase that shows phosphatase activity on nucleoside 5'-monophosphates. The chain is 5'-nucleotidase SurE from Methanococcus maripaludis (strain C6 / ATCC BAA-1332).